We begin with the raw amino-acid sequence, 511 residues long: Fusicocca-1,10(14)-diene-8beta,16-diol C-9 hydroxylase (511 aa).

The helical transmembrane segment at 7 to 29 (TVAALAAVFVAGTLLSRLASWIR) threads the bilayer. Residues N64, N163, and N343 are each glycosylated (N-linked (GlcNAc...) asparagine). C450 lines the heme pocket.

It belongs to the cytochrome P450 family. Heme serves as cofactor.

Its subcellular location is the membrane. It participates in mycotoxin biosynthesis. Its function is as follows. Cytochrome P450 monooxygenase; part of the 2 gene clusters that mediate the biosynthesis of fusicoccins, diterpene glucosides that display phytohormone-like activity and function as potent activators of plasma membrane H(+)-ATPases in plants by modifying 14-3-3 proteins and cause the plant disease constriction canker. The first step in the pathway is performed by the fusicoccadiene synthase PaFS that possesses both prenyl transferase and terpene cyclase activity, converting isopentenyl diphosphate and dimethylallyl diphosphate into geranylgeranyl diphosphate (GGDP) and successively converting GGDP into fusicocca-2,10(14)-diene, a precursor for fusicoccin H. The second step is the oxidation at the C-8 position by the cytochrome P450 monooxygenase PaP450-2 to yield fusicocca-2,10(14)-diene-8-beta-ol. The cytochrome P450 monooxygenase PaP450-1 then catalyzes the hydroxylation at the C-16 position to produce fusicocca-2,10(14)-diene-8-beta,16-diol. The dioxygenase fc-dox then catalyzes the 16-oxydation of fusicocca-2,10(14)-diene-8-beta,16-diol to yield an aldehyde (8-beta-hydroxyfusicocca-1,10(14)-dien-16-al). The short-chain dehydrogenase/reductase fc-sdr catalyzes the reduction of the aldehyde to yield fusicocca-1,10(14)-diene-8-beta,16-diol. The next step is the hydroxylation at C-9 performed by the cytochrome P450 monooxygenase PaP450-3 that leads to fusicoccin H aglycon which is glycosylated to fusicoccin H by the O-glycosyltransferase PaGT. Hydroxylation at C-12 by the cytochrome P450 monooxygenase PaP450-4 leads then to the production of fusicoccin Q and is followed by methylation by the O-methyltransferase PaMT to yield fusicoccin P. Fusicoccin P is further converted to fusicoccin J via prenylation by the O-glucose prenyltransferase PaPT. Cytochrome P450 monooxygenase PaP450-5 then performs hydroxylation at C-19 to yield dideacetyl-fusicoccin A which is acetylated to 3'-O-deacetyl-fusicoccin A by the O-acetyltransferase PaAT-2. Finally, a another acetylation by the O-acetyltransferase PaAT-1 yields fusicoccin A. This Phomopsis amygdali (Fusicoccum amygdali) protein is Fusicocca-1,10(14)-diene-8beta,16-diol C-9 hydroxylase.